A 322-amino-acid chain; its full sequence is Manganese-dependent ADP-ribose/CDP-alcohol diphosphatase (322 aa).

Zn(2+) contacts are provided by Asp13, Gln15, Asp60, Asn96, His228, His265, and His267.

The protein belongs to the ADPRibase-Mn family. As to quaternary structure, monomer. Mg(2+) is required as a cofactor.

It catalyses the reaction CDP-choline + H2O = phosphocholine + CMP + 2 H(+). The enzyme catalyses ADP-D-ribose + H2O = D-ribose 5-phosphate + AMP + 2 H(+). The catalysed reaction is CDP-glycerol + H2O = sn-glycerol 3-phosphate + CMP + 2 H(+). Functionally, hydrolyzes ADP-ribose, IDP-ribose, CDP-glycerol, CDP-choline and CDP-ethanolamine, but not other non-reducing ADP-sugars or CDP-glucose. The chain is Manganese-dependent ADP-ribose/CDP-alcohol diphosphatase (adprm) from Danio rerio (Zebrafish).